An 85-amino-acid chain; its full sequence is Cell division protein ZapA (85 aa).

Residues Ala60–Glu85 are a coiled coil.

It belongs to the ZapA family. Type 2 subfamily. As to quaternary structure, homodimer. Interacts with FtsZ.

It is found in the cytoplasm. Functionally, activator of cell division through the inhibition of FtsZ GTPase activity, therefore promoting FtsZ assembly into bundles of protofilaments necessary for the formation of the division Z ring. It is recruited early at mid-cell but it is not essential for cell division. The chain is Cell division protein ZapA from Bacillus pumilus (strain SAFR-032).